Consider the following 686-residue polypeptide: UvrABC system protein C (686 aa).

The segment covering 1-14 (MVHDSTDDPDDTRV) has biased composition (basic and acidic residues). The disordered stretch occupies residues 1–48 (MVHDSTDDPDDTRVRKSRRGTALDAPPQETAPPDLDPATTGGDDEDDA). The GIY-YIG domain maps to 81–160 (TSPGVYRMLN…IKQLRPRFNV (80 aa)). In terms of domain architecture, UVR spans 270-305 (HAVKQELAGEMEKAANELEFETAALYRDRLAALSAI).

The protein belongs to the UvrC family. Interacts with UvrB in an incision complex.

Its subcellular location is the cytoplasm. Functionally, the UvrABC repair system catalyzes the recognition and processing of DNA lesions. UvrC both incises the 5' and 3' sides of the lesion. The N-terminal half is responsible for the 3' incision and the C-terminal half is responsible for the 5' incision. This is UvrABC system protein C from Bradyrhizobium diazoefficiens (strain JCM 10833 / BCRC 13528 / IAM 13628 / NBRC 14792 / USDA 110).